The following is a 365-amino-acid chain: Aminomethyltransferase (365 aa).

This sequence belongs to the GcvT family. As to quaternary structure, the glycine cleavage system is composed of four proteins: P, T, L and H.

It carries out the reaction N(6)-[(R)-S(8)-aminomethyldihydrolipoyl]-L-lysyl-[protein] + (6S)-5,6,7,8-tetrahydrofolate = N(6)-[(R)-dihydrolipoyl]-L-lysyl-[protein] + (6R)-5,10-methylene-5,6,7,8-tetrahydrofolate + NH4(+). In terms of biological role, the glycine cleavage system catalyzes the degradation of glycine. The polypeptide is Aminomethyltransferase (Chlorobaculum parvum (strain DSM 263 / NCIMB 8327) (Chlorobium vibrioforme subsp. thiosulfatophilum)).